The chain runs to 183 residues: Glutathione-regulated potassium-efflux system ancillary protein KefG (183 aa).

It belongs to the NAD(P)H dehydrogenase (quinone) family. KefG subfamily. In terms of assembly, interacts with KefB.

It is found in the cell inner membrane. It carries out the reaction a quinone + NADH + H(+) = a quinol + NAD(+). The catalysed reaction is a quinone + NADPH + H(+) = a quinol + NADP(+). Its function is as follows. Regulatory subunit of a potassium efflux system that confers protection against electrophiles. Required for full activity of KefB. This chain is Glutathione-regulated potassium-efflux system ancillary protein KefG, found in Pectobacterium carotovorum subsp. carotovorum (strain PC1).